Consider the following 509-residue polypeptide: ATP synthase subunit alpha (509 aa).

Residue 171 to 178 (GDRKTGKT) coordinates ATP.

It belongs to the ATPase alpha/beta chains family. As to quaternary structure, F-type ATPases have 2 components, CF(1) - the catalytic core - and CF(0) - the membrane proton channel. CF(1) has five subunits: alpha(3), beta(3), gamma(1), delta(1), epsilon(1). CF(0) has three main subunits: a(1), b(2) and c(9-12). The alpha and beta chains form an alternating ring which encloses part of the gamma chain. CF(1) is attached to CF(0) by a central stalk formed by the gamma and epsilon chains, while a peripheral stalk is formed by the delta and b chains.

The protein localises to the cell inner membrane. It catalyses the reaction ATP + H2O + 4 H(+)(in) = ADP + phosphate + 5 H(+)(out). Produces ATP from ADP in the presence of a proton gradient across the membrane. The alpha chain is a regulatory subunit. The chain is ATP synthase subunit alpha from Ehrlichia canis (strain Jake).